The primary structure comprises 272 residues: Acidic leucine-rich nuclear phosphoprotein 32 family member B (272 aa).

LRR repeat units follow at residues 18 to 38, 43 to 64, 65 to 87, and 89 to 110; these read AVRE…EGLT, NLEF…PKLP, KLKK…AEEL, and SLTH…EPLK. The region spanning 123–161 is the LRRCT domain; the sequence is CEVTNRSDYRETVFRLLPQLSYLDGYDREDQEAPDSDVE. Positions 149–254 are enriched in acidic residues; that stretch reads DREDQEAPDS…DEDEDEEEEE (106 aa). Residues 149-272 are disordered; that stretch reads DREDQEAPDS…RETDDEGEDD (124 aa). Residues serine 164 and serine 171 each carry the phosphoserine modification. Over residues 255 to 265 the composition is skewed to basic and acidic residues; it reads SGKGEKRKRET. The Nuclear localization signal motif lies at 260-263; the sequence is KRKR. Residue threonine 265 is modified to Phosphothreonine.

The protein belongs to the ANP32 family. Interacts with histones H3 and H4. Interacts with KLF5; this interaction induces promoter region-specific histone incorporation and inhibition of histone acetylation by ANP32B. Post-translationally, some glutamate residues are glycylated by TTLL8. This modification occurs exclusively on glutamate residues and results in a glycine chain on the gamma-carboxyl group. Directly cleaved by caspase-3/CASP3.

It localises to the nucleus. In terms of biological role, multifunctional protein that is involved in the regulation of many processes including cell proliferation, apoptosis, cell cycle progression or transcription. Regulates the proliferation of neuronal stem cells, differentiation of leukemic cells and progression from G1 to S phase of the cell cycle. As negative regulator of caspase-3-dependent apoptosis, may act as an antagonist of ANP32A in regulating tissue homeostasis. Exhibits histone chaperone properties, able to recruit histones to certain promoters, thus regulating the transcription of specific genes. Also plays an essential role in the nucleocytoplasmic transport of specific mRNAs via the uncommon nuclear mRNA export receptor XPO1/CRM1. Participates in the regulation of adequate adaptive immune responses by acting on mRNA expression and cell proliferation. The protein is Acidic leucine-rich nuclear phosphoprotein 32 family member B (Anp32b) of Mus musculus (Mouse).